A 722-amino-acid polypeptide reads, in one-letter code: Formin-like protein 16 (722 aa).

4 disordered regions span residues 1–56 (MSPV…PMFD), 564–606 (ATED…PSRP), 635–672 (VGSP…HLSH), and 690–722 (PLLV…LRYQ). Residues 22 to 55 (PLPPPPPPPMRRSAPSPPPMSGRVPPPPPPPPMF) are compositionally biased toward pro residues. The FH2 domain maps to 182–571 (FRCPVTKRSS…KAATEDVFGG (390 aa)). Composition is skewed to pro residues over residues 593 to 605 (IRPP…PPSR), 638 to 658 (PSPP…PPPM), and 709 to 722 (APPP…LRYQ).

Belongs to the formin-like family. Class-II subfamily.

The protein is Formin-like protein 16 (FH16) of Arabidopsis thaliana (Mouse-ear cress).